Consider the following 1238-residue polypeptide: ATP-dependent helicase/nuclease subunit A (1238 aa).

One can recognise a UvrD-like helicase ATP-binding domain in the interval 12 to 490 (VSWTDDQWKA…IDLNANFRSR (479 aa)). ATP is bound at residue 33–40 (AAAGSGKT). Residues 510 to 818 (GEILYDDNAS…RLVTIHSSKG (309 aa)) form the UvrD-like helicase C-terminal domain.

Belongs to the helicase family. AddA subfamily. Heterodimer of AddA and AddB/RexB. The cofactor is Mg(2+).

The enzyme catalyses Couples ATP hydrolysis with the unwinding of duplex DNA by translocating in the 3'-5' direction.. It catalyses the reaction ATP + H2O = ADP + phosphate + H(+). Functionally, the heterodimer acts as both an ATP-dependent DNA helicase and an ATP-dependent, dual-direction single-stranded exonuclease. Recognizes the chi site generating a DNA molecule suitable for the initiation of homologous recombination. The AddA nuclease domain is required for chi fragment generation; this subunit has the helicase and 3' -&gt; 5' nuclease activities. The chain is ATP-dependent helicase/nuclease subunit A from Lysinibacillus sphaericus (strain C3-41).